We begin with the raw amino-acid sequence, 236 residues long: LexA repressor (236 aa).

The tract at residues 1–25 (MNDSNDTSVAGGAAGADSRVLSADS) is disordered. Positions 51-71 (IREIGDAVGLTSTSSVAHQLR) form a DNA-binding region, H-T-H motif. Catalysis depends on for autocatalytic cleavage activity residues serine 160 and lysine 197.

This sequence belongs to the peptidase S24 family. In terms of assembly, homodimer.

It carries out the reaction Hydrolysis of Ala-|-Gly bond in repressor LexA.. Represses a number of genes involved in the response to DNA damage (SOS response), including recA and lexA. In the presence of single-stranded DNA, RecA interacts with LexA causing an autocatalytic cleavage which disrupts the DNA-binding part of LexA, leading to derepression of the SOS regulon and eventually DNA repair. This chain is LexA repressor, found in Mycobacterium tuberculosis (strain ATCC 25177 / H37Ra).